A 489-amino-acid polypeptide reads, in one-letter code: Putative L,D-transpeptidase HI_1667 (489 aa).

Residues 10–29 (LSLFALSLSMMMSGCVLVGL) form a helical membrane-spanning segment. A L,D-TPase catalytic domain is found at 254–433 (NGIFVNIPSY…ETRKNTVLAS (180 aa)). H384 (proton donor/acceptor) is an active-site residue. The active-site Nucleophile is C403.

This sequence belongs to the YkuD family.

The protein resides in the membrane. It participates in cell wall biogenesis; peptidoglycan biosynthesis. This is Putative L,D-transpeptidase HI_1667 from Haemophilus influenzae (strain ATCC 51907 / DSM 11121 / KW20 / Rd).